We begin with the raw amino-acid sequence, 78 residues long: RNA-binding protein Hfq (78 aa).

The Sm domain occupies Asp10–Val69.

This sequence belongs to the Hfq family. In terms of assembly, homohexamer.

Its function is as follows. RNA chaperone that binds small regulatory RNA (sRNAs) and mRNAs to facilitate mRNA translational regulation in response to envelope stress, environmental stress and changes in metabolite concentrations. Also binds with high specificity to tRNAs. The chain is RNA-binding protein Hfq from Bordetella petrii (strain ATCC BAA-461 / DSM 12804 / CCUG 43448).